The sequence spans 374 residues: uncharacterized protein (374 aa).

A divalent metal cation-binding residues include Asp-158, His-160, Asp-190, Asn-221, His-312, and His-314.

The protein belongs to the metallophosphoesterase superfamily. A divalent metal cation is required as a cofactor.

This is an uncharacterized protein from Campylobacter jejuni subsp. jejuni serotype O:2 (strain ATCC 700819 / NCTC 11168).